We begin with the raw amino-acid sequence, 96 residues long: Large ribosomal subunit protein eL14 (96 aa).

The protein belongs to the eukaryotic ribosomal protein eL14 family.

This Staphylothermus marinus (strain ATCC 43588 / DSM 3639 / JCM 9404 / F1) protein is Large ribosomal subunit protein eL14.